A 1015-amino-acid chain; its full sequence is DNA ligase 3 (1015 aa).

Residues 94–186 (FCVDYAKRGT…QISQHIADLS (93 aa)) form a PARP-type zinc finger. Residues C106, C109, H140, and C143 each coordinate Zn(2+). Phosphoserine is present on residues S211, S217, S228, and S244. The disordered stretch occupies residues 229–255 (GFSAAKPNNSEQAPSSPAPGTSLSASK). Polar residues predominate over residues 234 to 253 (KPNNSEQAPSSPAPGTSLSA). 4 interaction with DNA regions span residues 279-282 (PSYN), 323-328 (VYNLND), 393-396 (TKED), and 426-432 (KMNSGAK). E511 contacts ATP. K513 functions as the N6-AMP-lysine intermediate in the catalytic mechanism. Residues R518 and R533 each coordinate ATP. Residues E565 and E660 each coordinate Mg(2+). Residues K665, R676, and K680 each coordinate ATP. The tract at residues 849–926 (DEASPTTGGS…KSSPVKVGMK (78 aa)) is disordered. The segment covering 854-884 (TTGGSSGENEGTAGSAGPCKGPPSKSSASAK) has biased composition (low complexity). Residue S919 is modified to Phosphoserine. The BRCT domain maps to 939-1015 (VLLDVFTGVR…IRKRRLIAPC (77 aa)).

It belongs to the ATP-dependent DNA ligase family. As to quaternary structure, isoform 3 interacts (via BRCT domain) with the nuclear DNA-repair protein XRCC1. Interacts with POLG. Interacts with POLB. Mg(2+) is required as a cofactor. As to expression, the alpha isoform is expressed in all tissues, while the beta isoform is expressed only in the testis.

It localises to the nucleus. It carries out the reaction ATP + (deoxyribonucleotide)n-3'-hydroxyl + 5'-phospho-(deoxyribonucleotide)m = (deoxyribonucleotide)n+m + AMP + diphosphate.. Its function is as follows. The alpha isoform interacts with DNA-repair protein XRCC1 and can correct defective DNA strand-break repair and sister chromatid exchange following treatment with ionizing radiation and alkylating agents. The beta isoform does not interact with XRCC1 and may be specifically involved in the completion of homologous recombination events that occur during meiotic prophase. The protein is DNA ligase 3 (Lig3) of Mus musculus (Mouse).